Consider the following 652-residue polypeptide: Small ribosomal subunit protein mS39 (652 aa).

A mitochondrion-targeting transit peptide spans 1-37 (MYLSRQLRLLPRANIACSLSSSGAHYTTAAPAEDAPI). 5 PPR repeats span residues 129–163 (DSVV…GNPI), 225–259 (TPQS…QVQL), 260–299 (DTNT…KLRP), 300–338 (NLGT…GVNP), and 547–581 (TGQM…QHRI).

It belongs to the mitochondrion-specific ribosomal protein mS39 family.

It localises to the mitochondrion. Its function is as follows. Mitochondrial protein that may have a role in mitochondrial translation. Essential for larval development. This Drosophila melanogaster (Fruit fly) protein is Small ribosomal subunit protein mS39.